The primary structure comprises 876 residues: Valine--tRNA ligase (876 aa).

A 'HIGH' region motif is present at residues 44-54 (PNVTGKLHLGH). Positions 520-524 (KMSKS) match the 'KMSKS' region motif. Lys-523 contacts ATP. Residues 805–876 (LEGLIDMDKE…VKARIEQLKA (72 aa)) adopt a coiled-coil conformation.

The protein belongs to the class-I aminoacyl-tRNA synthetase family. ValS type 1 subfamily. Monomer.

It localises to the cytoplasm. It catalyses the reaction tRNA(Val) + L-valine + ATP = L-valyl-tRNA(Val) + AMP + diphosphate. Its function is as follows. Catalyzes the attachment of valine to tRNA(Val). As ValRS can inadvertently accommodate and process structurally similar amino acids such as threonine, to avoid such errors, it has a 'posttransfer' editing activity that hydrolyzes mischarged Thr-tRNA(Val) in a tRNA-dependent manner. This is Valine--tRNA ligase from Staphylococcus aureus (strain bovine RF122 / ET3-1).